Reading from the N-terminus, the 527-residue chain is Berberine bridge enzyme-like 5 (527 aa).

An N-terminal signal peptide occupies residues 1 to 19; the sequence is MKALFSVLCLVLLVSILRA. The cysteines at positions 32 and 95 are disulfide-linked. Residues N35 and N52 are each glycosylated (N-linked (GlcNAc...) asparagine). Residues 73 to 247 enclose the FAD-binding PCMH-type domain; the sequence is NYQKLVAIVA…LSWKINLVEV (175 aa). A cross-link (6-(S-cysteinyl)-8alpha-(pros-histidyl)-FAD (His-Cys)) is located at residues 110 to 172; it reads HDYEGLSYTS…QTLAFPAGVC (63 aa). N-linked (GlcNAc...) asparagine glycosylation occurs at N341.

The protein belongs to the oxygen-dependent FAD-linked oxidoreductase family. Requires FAD as cofactor. The FAD cofactor is bound via a bicovalent 6-S-cysteinyl, 8alpha-N1-histidyl FAD linkage.

It localises to the secreted. It is found in the cell wall. Functionally, probable flavin-dependent oxidoreductase. This Arabidopsis thaliana (Mouse-ear cress) protein is Berberine bridge enzyme-like 5.